We begin with the raw amino-acid sequence, 25 residues long: Neuromedin-U-25 (25 aa).

Residue asparagine 25 is modified to Asparagine amide.

The protein belongs to the NmU family.

It localises to the secreted. Stimulates uterine smooth muscle contraction and causes selective vasoconstriction. In Gallus gallus (Chicken), this protein is Neuromedin-U-25 (NMU).